An 89-amino-acid chain; its full sequence is Small ribosomal subunit protein uS15 (89 aa).

Belongs to the universal ribosomal protein uS15 family. As to quaternary structure, part of the 30S ribosomal subunit. Forms a bridge to the 50S subunit in the 70S ribosome, contacting the 23S rRNA.

One of the primary rRNA binding proteins, it binds directly to 16S rRNA where it helps nucleate assembly of the platform of the 30S subunit by binding and bridging several RNA helices of the 16S rRNA. In terms of biological role, forms an intersubunit bridge (bridge B4) with the 23S rRNA of the 50S subunit in the ribosome. The protein is Small ribosomal subunit protein uS15 of Bifidobacterium longum (strain DJO10A).